Reading from the N-terminus, the 1071-residue chain is V-type proton ATPase catalytic subunit A (1071 aa).

The residue at position 2 (Ala2) is an N-acetylalanine. Thr131 carries the phosphothreonine modification. ATP is bound at residue 257 to 264 (GAFGCGKT). In terms of domain architecture, DOD-type homing endonuclease spans 494–642 (LLGLWIGDGL…LVSLARSLGL (149 aa)). Phosphoserine occurs at positions 858 and 928.

The protein belongs to the ATPase alpha/beta chains family. V-ATPase is a heteromultimeric enzyme composed of a peripheral catalytic V1 complex (components A to H) attached to an integral membrane V0 proton pore complex (components: a, c, c', c'', d, e, f and VOA1). Interacts with RAV1 and RAV2 components of the RAVE complex, which are essential for the stability and assembly of V-ATPase. In terms of processing, this protein undergoes a protein self splicing that involves a post-translational excision of the VDE intervening region (intein) followed by peptide ligation.

The protein localises to the vacuole membrane. The catalysed reaction is ATP + H2O + 4 H(+)(in) = ADP + phosphate + 5 H(+)(out). Catalytic subunit of the V1 complex of vacuolar(H+)-ATPase (V-ATPase), a multisubunit enzyme composed of a peripheral complex (V1) that hydrolyzes ATP and a membrane integral complex (V0) that translocates protons. V-ATPase is responsible for acidifying and maintaining the pH of intracellular compartments. In terms of biological role, PI-SceI is an endonuclease that can cleave at a site present in a VMA1 allele that lacks the derived endonuclease segment of the open reading frame; cleavage at this site only occurs during meiosis and initiates 'homing', a genetic event that converts a VMA1 allele lacking VDE into one that contains it. The polypeptide is V-type proton ATPase catalytic subunit A (Saccharomyces cerevisiae (strain ATCC 204508 / S288c) (Baker's yeast)).